The following is a 376-amino-acid chain: MSKIKVLIVDDSALVRQMLQEMLKSDPEIEVVGTASDPYDAREKVKQLHPDVLTLDVEMPRMDGVTFLKNLMRLHPLPVVMISTLTEKGADITFEALDLGAVDFVAKPKIDLQHTFEDYTDEICRKVKTASKVSKWQLERQYARYVANKESKPKVLSKPGSLVSKVVEKFTTDAIVPKKAPSDFSKPSHKVIALGASTGGTEAIKEVLMRLPSTTPAIVITQHIPASFSLPFAQRMNSVSEMEVTQAEDRQPILAGHVYIAPGDKHLLVERTSSGYICRLNDGPPVNRHKPSVDVMFRTVVQSVGKNAVGVLLTGMGADGAKGMKELQEIGVPTIVQDEKTCVVWGMPGEAVKLGAADYVLPLGSIPEKILALIKK.

The Response regulatory domain occupies 5-122; that stretch reads KVLIVDDSAL…QHTFEDYTDE (118 aa). The residue at position 56 (Asp56) is a 4-aspartylphosphate. The CheB-type methylesterase domain occupies 185–376; that stretch reads SKPSHKVIAL…PEKILALIKK (192 aa). Residues Ser197, His223, and Asp319 contribute to the active site.

The protein belongs to the CheB family. Post-translationally, phosphorylated by CheA. Phosphorylation of the N-terminal regulatory domain activates the methylesterase activity.

It is found in the cytoplasm. The enzyme catalyses [protein]-L-glutamate 5-O-methyl ester + H2O = L-glutamyl-[protein] + methanol + H(+). It carries out the reaction L-glutaminyl-[protein] + H2O = L-glutamyl-[protein] + NH4(+). Functionally, involved in chemotaxis. Part of a chemotaxis signal transduction system that modulates chemotaxis in response to various stimuli. Catalyzes the demethylation of specific methylglutamate residues introduced into the chemoreceptors (methyl-accepting chemotaxis proteins or MCP) by CheR. Also mediates the irreversible deamidation of specific glutamine residues to glutamic acid. The protein is Protein-glutamate methylesterase/protein-glutamine glutaminase of Hydrogenovibrio crunogenus (strain DSM 25203 / XCL-2) (Thiomicrospira crunogena).